The chain runs to 171 residues: UPF0763 protein HPP12_0677 (171 aa).

This sequence belongs to the UPF0763 family.

The sequence is that of UPF0763 protein HPP12_0677 from Helicobacter pylori (strain P12).